The primary structure comprises 439 residues: Xaa-Pro dipeptidase (439 aa).

The Mn(2+) site is built by Asp244, Asp255, His335, Glu380, and Glu419.

The protein belongs to the peptidase M24B family. Bacterial-type prolidase subfamily. Mn(2+) serves as cofactor.

The enzyme catalyses Xaa-L-Pro dipeptide + H2O = an L-alpha-amino acid + L-proline. In terms of biological role, splits dipeptides with a prolyl residue in the C-terminal position. In Shewanella sediminis (strain HAW-EB3), this protein is Xaa-Pro dipeptidase.